A 598-amino-acid polypeptide reads, in one-letter code: IQ calmodulin-binding motif-containing protein 1 (598 aa).

The interaction with BBS1, BBS8 and BBS9 stretch occupies residues 1–157 (MKPTGTDPRI…SLFWLLGGHV (157 aa)). The tract at residues 287-598 (QEVEEQKLHQ…NLFIGGTKPP (312 aa)) is interaction with CEP290, BBS1, BBS2, BBS4, BBS5, BBS7, BBS8 and BBS9. IQ domains follow at residues 294–317 (LHQAACLIQAYWKGFQTRKRLKKL), 318–338 (PSAVIALQRSFRSKRSKMLLE), 387–416 (EEKSALIIQKHWRGYRERKNFHQQRQSLIE), and 417–437 (YKAAVTLQRAALKFLAKCRKK). The stretch at 336–373 (LLEINRQKEEEDLKLQLQLQRQRAMRLSRELQLSMLEI) forms a coiled coil. The interaction with BBS1, BBS2, BBS4, BBS7, BBS8 and BBS9 stretch occupies residues 530 to 598 (AEGKEPELFL…NLFIGGTKPP (69 aa)). Ser-572 carries the post-translational modification Phosphoserine.

In terms of assembly, interacts with CEP290/NPHP6; IQCB1/NPHP5 and CEP290 are proposed to form a functional NPHP5-6 module/NPHP6; localized to the centrosome. Interacts with calmodulin, ATXN10. Interacts with NPHP1, INVS, NPHP4 and RPGRIP1L; these interactions likely require additional interactors. Associates with the BBSome complex; interacts with BBS1, BBS2, BBS4, BBS5, BBS7, BBS8 and BBS9. As to expression, ubiquitously expressed in fetal and adult tissues. Localized to the outer segments and connecting cilia of photoreceptor cells. Up-regulated in a number of primary colorectal and gastric tumors.

The protein localises to the cytoplasm. It is found in the cytoskeleton. It localises to the microtubule organizing center. The protein resides in the centrosome. Its subcellular location is the centriole. Functionally, involved in ciliogenesis. The function in an early step in cilia formation depends on its association with CEP290/NPHP6. Involved in regulation of the BBSome complex integrity, specifically for presence of BBS2 and BBS5 in the complex, and in ciliary targeting of selected BBSome cargos. May play a role in controlling entry of the BBSome complex to cilia possibly implicating CEP290/NPHP6. The chain is IQ calmodulin-binding motif-containing protein 1 (IQCB1) from Homo sapiens (Human).